We begin with the raw amino-acid sequence, 676 residues long: Urocanate hydratase (676 aa).

NAD(+)-binding positions include 126–127 (GG), glutamine 204, 251–253 (GMS), glutamate 271, 317–318 (NV), 343–347 (QTSCH), 354–355 (YY), and tyrosine 403. N6-succinyllysine is present on lysine 534. Glycine 594 contacts NAD(+).

Belongs to the urocanase family. It depends on NAD(+) as a cofactor.

The catalysed reaction is 4-imidazolone-5-propanoate = trans-urocanate + H2O. It functions in the pathway amino-acid degradation; L-histidine degradation into L-glutamate; N-formimidoyl-L-glutamate from L-histidine: step 2/3. The polypeptide is Urocanate hydratase (Uroc1) (Mus musculus (Mouse)).